Reading from the N-terminus, the 61-residue chain is Small ribosomal subunit protein uS14B (61 aa).

Zn(2+) is bound by residues Cys24, Cys27, Cys40, and Cys43.

The protein belongs to the universal ribosomal protein uS14 family. Zinc-binding uS14 subfamily. In terms of assembly, part of the 30S ribosomal subunit. Contacts proteins S3 and S10. It depends on Zn(2+) as a cofactor.

In terms of biological role, binds 16S rRNA, required for the assembly of 30S particles and may also be responsible for determining the conformation of the 16S rRNA at the A site. The chain is Small ribosomal subunit protein uS14B from Mycobacterium bovis (strain ATCC BAA-935 / AF2122/97).